A 763-amino-acid chain; its full sequence is MAP7 domain-containing protein 2 (763 aa).

The segment covering 1–11 has biased composition (gly residues); it reads MERGGGGGFGT. Disordered regions lie at residues 1–63, 96–124, 149–268, and 300–540; these read MERG…KERR, WRKL…LREE, SWGA…DVGK, and PLRR…KQKE. Residues 52–63 show a composition bias toward basic and acidic residues; that stretch reads SGERQRLAKERR. Residues 54 to 147 adopt a coiled-coil conformation; that stretch reads ERQRLAKERR…RTQQLELKKK (94 aa). Polar residues predominate over residues 192-206; that stretch reads ESTNACDKLSTSTMS. Basic and acidic residues-rich tracts occupy residues 355 to 371, 385 to 400, and 430 to 540; these read MPKR…EREG, ALEK…EKHA, and LAEK…KQKE.

The protein belongs to the MAP7 family. Interacts (via N-terminus) with microtubules; facilitates microtubule stabilization. Interacts with kinesin-1 family members, KIF5A, KIF5B and KIF5C.

The protein localises to the cytoplasm. The protein resides in the cytoskeleton. Its subcellular location is the microtubule organizing center. It is found in the centrosome. It localises to the midbody. The protein localises to the cell projection. The protein resides in the neuron projection. Its subcellular location is the axon. In terms of biological role, microtubule-stabilizing protein involved in the control of cell motility and neurite outgrowth. Acts as a critical cofactor for kinesin transport; in the proximal axon regulates kinesin-1 family members, KIF5A, KIF5B and KIF5C recruitment to microtubules and contributes to kinesin-1-mediated transport in the axons. This chain is MAP7 domain-containing protein 2 (MAP7D2), found in Pongo abelii (Sumatran orangutan).